The chain runs to 118 residues: UPF0295 protein BCE_0593 (118 aa).

The next 2 membrane-spanning stretches (helical) occupy residues 12–32 (IRTF…LGVF) and 43–63 (FMMV…WIGM).

The protein belongs to the UPF0295 family.

The protein localises to the cell membrane. The sequence is that of UPF0295 protein BCE_0593 from Bacillus cereus (strain ATCC 10987 / NRS 248).